We begin with the raw amino-acid sequence, 120 residues long: Small ribosomal subunit protein uS12c (120 aa).

The protein belongs to the universal ribosomal protein uS12 family. Part of the 30S ribosomal subunit.

Its subcellular location is the plastid. The protein resides in the apicoplast. In terms of biological role, with S4 and S5 plays an important role in translational accuracy. Located at the interface of the 30S and 50S subunits. The sequence is that of Small ribosomal subunit protein uS12c (rps12) from Eimeria tenella (Coccidian parasite).